Reading from the N-terminus, the 228-residue chain is Vacuolar-sorting protein snf7 (228 aa).

2 coiled-coil regions span residues 25–94 (ILGL…QINA) and 125–226 (EKVD…QAEM).

It belongs to the SNF7 family. As to quaternary structure, a component of the endosomal sorting required for transport complex III (ESCRT-III).

It localises to the cytoplasm. The protein localises to the endosome membrane. Its function is as follows. Required for the sorting and concentration of proteins resulting in the entry of these proteins into the invaginating vesicles of the multivesicular body (MVB). Also required for the proteolytic cleavage of the transcription factor pacc-1 in response to alkaline ambient pH. The sequence is that of Vacuolar-sorting protein snf7 (vsp-3) from Neurospora crassa (strain ATCC 24698 / 74-OR23-1A / CBS 708.71 / DSM 1257 / FGSC 987).